A 738-amino-acid chain; its full sequence is Sporulation kinase E (738 aa).

4 PAS domains span residues 29–99 (ELNQ…FKKG), 150–220 (NEQL…NRKG), 271–342 (SEER…YGEI), and 391–462 (SELK…FDEM). In terms of domain architecture, Histidine kinase spans 523–729 (GIAHEIRNPM…VFHITLPVRQ (207 aa)). Phosphohistidine; by autocatalysis is present on His526.

The catalysed reaction is ATP + protein L-histidine = ADP + protein N-phospho-L-histidine.. In terms of biological role, phosphorylates the sporulation-regulatory protein spo0A under biofilm growth conditions. Also able to weakly phosphorylate spo0F. The chain is Sporulation kinase E (kinE) from Bacillus subtilis (strain 168).